Consider the following 509-residue polypeptide: Steroid 17-alpha-hydroxylase/17,20 lyase (509 aa).

Cys445 is a binding site for heme.

This sequence belongs to the cytochrome P450 family. Heme serves as cofactor.

The protein localises to the membrane. It catalyses the reaction a C21-steroid + reduced [NADPH--hemoprotein reductase] + O2 = a 17alpha-hydroxy-C21-steroid + oxidized [NADPH--hemoprotein reductase] + H2O + H(+). The catalysed reaction is 17alpha-hydroxyprogesterone + reduced [NADPH--hemoprotein reductase] + O2 = androst-4-ene-3,17-dione + acetate + oxidized [NADPH--hemoprotein reductase] + H2O + 2 H(+). The enzyme catalyses 17alpha-hydroxypregnenolone + reduced [NADPH--hemoprotein reductase] + O2 = 3beta-hydroxyandrost-5-en-17-one + acetate + oxidized [NADPH--hemoprotein reductase] + H2O + 2 H(+). Its pathway is lipid metabolism; steroid biosynthesis. Functionally, conversion of pregnenolone and progesterone to their 17-alpha-hydroxylated products and subsequently to dehydroepiandrosterone (DHEA) and androstenedione. Catalyzes both the 17-alpha-hydroxylation and the 17,20-lyase reaction. The protein is Steroid 17-alpha-hydroxylase/17,20 lyase (CYP17A1) of Squalus acanthias (Spiny dogfish).